Consider the following 170-residue polypeptide: Protein-lysine myristoyltransferase HlyC (170 aa).

H23 is an active-site residue. Residue H151 participates in heme binding.

The protein belongs to the RTX toxin acyltransferase family. Monomer. Proteolytically cleaved by the protease systems ClpAP, ClpXP and FtsH, leading to its degradation.

The protein resides in the cytoplasm. It catalyses the reaction tetradecanoyl-[ACP] + L-lysyl-[protein] = N(6)-tetradecanoyl-L-lysyl-[protein] + holo-[ACP] + H(+). The acyltransferase activity is inhibited by heme. Functionally, protein-lysine myristoyltransferase that catalyzes myristoylation of the protoxin (HlyA) at two internal lysine residues, thereby converting it to the active toxin. This is Protein-lysine myristoyltransferase HlyC from Escherichia coli.